Here is a 468-residue protein sequence, read N- to C-terminus: UDP-N-acetylmuramoyl-L-alanine--L-glutamate ligase (468 aa).

122 to 128 (GTKGKST) provides a ligand contact to ATP.

The protein belongs to the MurCDEF family. MurD2 subfamily.

It localises to the cytoplasm. The catalysed reaction is UDP-N-acetyl-alpha-D-muramoyl-L-alanine + L-glutamate + ATP = UDP-N-acetyl-alpha-D-muramoyl-L-alanyl-L-glutamate + ADP + phosphate + H(+). Its pathway is cell wall biogenesis; peptidoglycan biosynthesis. In terms of biological role, cell wall formation. Catalyzes the addition of L-glutamate to the nucleotide precursor UDP-N-acetylmuramoyl-L-alanine. This chain is UDP-N-acetylmuramoyl-L-alanine--L-glutamate ligase, found in Xanthomonas axonopodis pv. citri (strain 306).